The primary structure comprises 169 residues: N-alpha-acetyltransferase 50 (169 aa).

The region spanning 6–155 is the N-acetyltransferase domain; sequence IELGDVTPHN…DAHVLQKNLK (150 aa). The residue at position 12 (T12) is a Phosphothreonine. Position 31 (Y31) interacts with substrate. K34 and K37 each carry N6-acetyllysine. Y73 is a catalytic residue. M75 serves as a coordination point for substrate. 77 to 90 provides a ligand contact to acetyl-CoA; the sequence is LGCLAPYRRLGIGT. Y110 bears the Phosphotyrosine mark. H112 is a catalytic residue. CoA is bound at residue 117 to 126; sequence NESAIDFYRK. The segment at 138–141 is substrate; sequence YYKR. Position 140 is an N6-acetyllysine (K140).

Belongs to the acetyltransferase family. GNAT subfamily. Component of the N-terminal acetyltransferase E (NatE) complex at least composed of NAA10, NAA15 and NAA50. Interacts with NAA10. Interacts with NAA15. Predominantly interacts with NAA15 in the N-terminal acetyltransferase A complex (NatA complex); the interactions reduce the acetylation activity of the NatA complex. Component of the N-terminal acetyltransferase E (NatE)/HYPK complex at least composed of NAA10, NAA15, NAA50 and HYPK. Within the complex interacts with NAA15. Its capacity to interact with the NatA complex is reduced by HYPK. Interacts with NAA35.

It localises to the cytoplasm. The protein resides in the nucleus. The enzyme catalyses N-terminal L-methionyl-L-alanyl-[protein] + acetyl-CoA = N-terminal N(alpha)-acetyl-L-methionyl-L-alanyl-[protein] + CoA + H(+). It catalyses the reaction N-terminal L-methionyl-L-seryl-[protein] + acetyl-CoA = N-terminal N(alpha)-acetyl-L-methionyl-L-seryl-[protein] + CoA + H(+). It carries out the reaction N-terminal L-methionyl-L-valyl-[protein] + acetyl-CoA = N-terminal N(alpha)-acetyl-L-methionyl-L-valyl-[protein] + CoA + H(+). The catalysed reaction is N-terminal L-methionyl-L-threonyl-[protein] + acetyl-CoA = N-terminal N(alpha)-acetyl-L-methionyl-L-threonyl-[protein] + CoA + H(+). The enzyme catalyses N-terminal L-methionyl-L-lysyl-[protein] + acetyl-CoA = N-terminal N(alpha)-acetyl-L-methionyl-L-lysyl-[protein] + CoA + H(+). It catalyses the reaction N-terminal L-methionyl-L-leucyl-[protein] + acetyl-CoA = N-terminal N(alpha)-acetyl-L-methionyl-L-leucyl-[protein] + CoA + H(+). It carries out the reaction N-terminal L-methionyl-L-phenylalanyl-[protein] + acetyl-CoA = N-terminal N(alpha)-acetyl-L-methionyl-L-phenylalanyl-[protein] + CoA + H(+). The catalysed reaction is N-terminal L-methionyl-L-tyrosyl-[protein] + acetyl-CoA = N-terminal N(alpha)-acetyl-L-methionyl-L-tyrosyl-[protein] + CoA + H(+). Functionally, N-alpha-acetyltransferase that acetylates the N-terminus of proteins that retain their initiating methionine. Has a broad substrate specificity: able to acetylate the initiator methionine of most peptides, except for those with a proline in second position. Also displays N-epsilon-acetyltransferase activity by mediating acetylation of the side chain of specific lysines on proteins. Autoacetylates in vivo. The relevance of N-epsilon-acetyltransferase activity is however unclear: able to acetylate H4 in vitro, but this result has not been confirmed in vivo. Component of N-alpha-acetyltransferase complexes containing NAA10 and NAA15, which has N-alpha-acetyltransferase activity. Does not influence the acetyltransferase activity of NAA10. However, it negatively regulates the N-alpha-acetyltransferase activity of the N-terminal acetyltransferase A complex (also called the NatA complex). The multiprotein complexes probably constitute the major contributor for N-terminal acetylation at the ribosome exit tunnel, with NAA10 acetylating all amino termini that are devoid of methionine and NAA50 acetylating other peptides. Required for sister chromatid cohesion during mitosis by promoting binding of CDCA5/sororin to cohesin: may act by counteracting the function of NAA10. This chain is N-alpha-acetyltransferase 50 (NAA50), found in Bos taurus (Bovine).